The primary structure comprises 722 residues: Delta-like protein 1 (722 aa).

An N-terminal signal peptide occupies residues 1 to 17 (MGRRSALALAVVSALLC). Residues 18–545 (QVWSSGVFEL…MESQGGPFPW (528 aa)) are Extracellular-facing. One can recognise a DSL domain in the interval 176–220 (FVCDEHYYGEGCSVFCRPRDDAFGHFTCGDRGEKMCDPGWKGQYC). Cystine bridges form between cysteine 178–cysteine 187, cysteine 191–cysteine 203, cysteine 211–cysteine 220, cysteine 225–cysteine 236, cysteine 229–cysteine 242, cysteine 244–cysteine 253, cysteine 256–cysteine 267, cysteine 262–cysteine 273, cysteine 275–cysteine 284, cysteine 291–cysteine 303, cysteine 297–cysteine 313, cysteine 315–cysteine 324, cysteine 331–cysteine 342, cysteine 336–cysteine 351, cysteine 353–cysteine 362, cysteine 369–cysteine 380, cysteine 374–cysteine 390, cysteine 392–cysteine 401, cysteine 408–cysteine 419, cysteine 413–cysteine 428, cysteine 430–cysteine 439, cysteine 446–cysteine 457, cysteine 451–cysteine 466, cysteine 468–cysteine 477, cysteine 484–cysteine 495, cysteine 489–cysteine 504, and cysteine 506–cysteine 515. EGF-like domains are found at residues 225 to 253 (CLPG…GRYC), 256 to 284 (CIRY…GLFC), and 291 to 324 (CTHH…GANC). The EGF-like 4; calcium-binding domain maps to 331–362 (CAPSPCKNGASCTDLEDSFSCTCPPGFYGKVC). EGF-like domains lie at 369 to 401 (CADG…GFNC) and 408 to 439 (CGSS…GRYC). The 32-residue stretch at 446-477 (CASSPCANGGTCRDSVNDFSCTCPPGYTGKNC) folds into the EGF-like 7; calcium-binding domain. Residue asparagine 476 is glycosylated (N-linked (GlcNAc...) asparagine). The EGF-like 8 domain maps to 484 to 515 (CEHAPCHNGATCHQRGQRYMCECAQGYGGPNC). The helical transmembrane segment at 546–568 (VAVCAGVVLVLLLLLGCAAVVVC) threads the bilayer. The Cytoplasmic segment spans residues 569 to 722 (VRLKLQKHQP…KDECVIATEV (154 aa)). Lysine 613 participates in a covalent cross-link: Glycyl lysine isopeptide (Lys-Gly) (interchain with G-Cter in ubiquitin). Threonine 638 is subject to Phosphothreonine. Residues 655-664 (RDTHSKRDTK) are compositionally biased toward basic and acidic residues. The disordered stretch occupies residues 655–697 (RDTHSKRDTKCQSQSSAGEEKIAPTLRGGEIPDRKRPESVYST). Serine 693 carries the post-translational modification Phosphoserine; by PKB. Serine 696 carries the phosphoserine modification. The tract at residues 719-722 (ATEV) is interaction with MAGI1.

In terms of assembly, homodimer. Interacts with TJP1. Interacts with MMP14; inhibits DLL1-induced Notch signaling. Interacts with MAGI1 (via PDZ domain); forms a complex with CTNNB1 and CDH2 and promotes recruitment to the adherens junction and stabilization on the cell surface. Interacts with PSEN1; undergoes a presenilin-dependent gamma-secretase cleavage that releases a Dll1-intracellular form. Interacts with MFAP5. Interacts with MIB1. Interacts with NEURL1B; leads to ubiquitination. Interacts with NEURL1. Interacts with SYNJ2BP; enhances DLL1 protein stability, and promotes Notch signaling in endothelial cells. Interacts with MAGI1, MAGI2, MAGI3 and MPDZ. Interacts (via ubiquitin) with EPN1 (via IUM domain); binding with NOTCH1 attached to neighboring cell, promotes ligand ubiquitination and EPN1 interaction, leading to NECD transendocytosis and Notch signaling. Interacts with NOTCH1. Ubiquitinated by MIB (MIB1 or MIB2), leading to its endocytosis and subsequent degradation. Ubiquitinated; promotes recycling back to the plasma membrane and confers a strong affinity for NOTCH1. Multi-ubiquitination of Lys-613 by MIB1 promotes both cis and trans-interaction with NOTCH1, as well as activation of Notch signaling. Ubiquitinated by NEURL1B. Post-translationally, phosphorylated in a membrane association-dependent manner. Phosphorylation at Ser-696 requires the presence of Ser-693, whereas phosphorylation at Thr-638 and Ser-693 occurs independently of the other sites. Phosphorylation is required for full ligand activity in vitro and affects surface presentation, ectodomain shedding, and endocytosis. In terms of processing, cleaved by MMP14; negatively regulates DLL1-induced Notch signaling in HPCs, modulating B-lymphocyte differentiation in bone marrow. Undergoes two consecutive processing events: a shedding event, partially by ADAM10, that generates a soluble extracellular form and an intracellular membrane-anchored form, followed by a gamma-secretase cleavage releasing an intracellular fragment. O-fucosylated. Can be elongated to a disaccharide by MFNG. In the embryo, expressed in the paraxial mesoderm and nervous system. Expressed at high levels in adult heart and at lower levels, in adult lung. Highly expressed in satellite cells from masseter and tongue than in satellite cells from leg and extraocular muscle.?.

The protein localises to the apical cell membrane. Its subcellular location is the cell junction. It is found in the adherens junction. It localises to the membrane raft. The protein resides in the cell membrane. The protein localises to the nucleus. Functionally, transmembrane ligand protein of NOTCH1, NOTCH2 and NOTCH3 receptors that binds the extracellular domain (ECD) of Notch receptor in a cis and trans fashion manner. Following transinteraction, ligand cells produce mechanical force that depends of a clathrin-mediated endocytosis, requiring ligand ubiquitination, EPN1 interaction, and actin polymerisation; these events promote Notch receptor extracellular domain (NECD) transendocytosis and triggers Notch signaling through induction of cleavage, hyperphosphorylation, and nuclear accumulation of the intracellular domain of Notch receptors (NICD). Is required for embryonic development and maintenance of adult stem cells in many different tissues and immune systeme; the DLL1-induced Notch signaling is mediated through an intercellular communication that regulates cell lineage, cell specification, cell patterning and morphogenesis through effects on differentiation and proliferation. Plays a role in brain development at different level, namely by regulating neuronal differentiation of neural precursor cells via cell-cell interaction, most likely through the lateral inhibitory system in an endogenous level dependent-manner. During neocortex development, Dll1-Notch signaling transmission is mediated by dynamic interactions between intermediate neurogenic progenitors and radial glia; the cell-cell interactions are mediated via dynamic and transient elongation processes, likely to reactivate/maintain Notch activity in neighboring progenitors, and coordinate progenitor cell division and differentiation across radial and zonal boundaries. During cerebellar development, regulates Bergmann glial monolayer formation and its morphological maturation through a Notch signaling pathway. At the retina and spinal cord level, regulates neurogenesis by preventing the premature differentiation of neural progenitors and also by maintaining progenitors in spinal cord through Notch signaling pathway. Also controls neurogenesis of the neural tube in a progenitor domain-specific fashion along the dorsoventral axis. Maintains quiescence of neural stem cells and plays a role as a fate determinant that segregates asymmetrically to one daughter cell during neural stem cells mitosis, resulting in neuronal differentiation in Dll1-inheriting cell. Plays a role in immune systeme development, namely the development of all T-cells and marginal zone (MZ) B cells. Blocks the differentiation of progenitor cells into the B-cell lineage while promoting the emergence of a population of cells with the characteristics of a T-cell/NK-cell precursor. Upon MMP14 cleavage, negatively regulates Notch signaling in haematopoietic progenitor cells to specifically maintain normal B-cell development in bone marrow. Also plays a role during muscle development. During early development, inhibits myoblasts differentiation from the medial dermomyotomal lip and later regulates progenitor cell differentiation. Directly modulates cell adhesion and basal lamina formation in satellite cells through Notch signaling. Maintains myogenic progenitors pool by suppressing differentiation through down-regulation of MYOD1 and is required for satellite cell homing and PAX7 expression. During craniofacial and trunk myogenesis suppresses differentiation of cranial mesoderm-derived and somite-derived muscle via MYOD1 regulation but in cranial mesoderm-derived progenitors, is neither required for satellite cell homing nor for PAX7 expression. Also plays a role during pancreatic cell development. During type B pancreatic cell development, may be involved in the initiation of proximodistal patterning in the early pancreatic epithelium. Stimulates multipotent pancreatic progenitor cells proliferation and pancreatic growth by maintaining HES1 expression and PTF1A protein levels. During fetal stages of development, is required to maintain arterial identity and the responsiveness of arterial endothelial cells for VEGFA through regulation of KDR activation and NRP1 expression. Controls sprouting angiogenesis and subsequent vertical branch formation through regulation on tip cell differentiation. Negatively regulates goblet cell differentiation in intestine and controls secretory fat commitment through lateral inhibition in small intestine. Plays a role during inner ear development; negatively regulates auditory hair cell differentiation. Plays a role during nephron development through Notch signaling pathway. Regulates growth, blood pressure and energy homeostasis. The polypeptide is Delta-like protein 1 (Dll1) (Mus musculus (Mouse)).